The following is a 236-amino-acid chain: 7-cyano-7-deazaguanine synthase (236 aa).

13–23 (FSGGQDSTVCL) provides a ligand contact to ATP. The Zn(2+) site is built by C200, C215, C218, and C221.

This sequence belongs to the QueC family. Requires Zn(2+) as cofactor.

It carries out the reaction 7-carboxy-7-deazaguanine + NH4(+) + ATP = 7-cyano-7-deazaguanine + ADP + phosphate + H2O + H(+). The protein operates within purine metabolism; 7-cyano-7-deazaguanine biosynthesis. In terms of biological role, catalyzes the ATP-dependent conversion of 7-carboxy-7-deazaguanine (CDG) to 7-cyano-7-deazaguanine (preQ(0)). The polypeptide is 7-cyano-7-deazaguanine synthase (Parvibaculum lavamentivorans (strain DS-1 / DSM 13023 / NCIMB 13966)).